The sequence spans 517 residues: GMP synthase [glutamine-hydrolyzing] (517 aa).

A Glutamine amidotransferase type-1 domain is found at 9-199 (RILILDFGSQ…VLNVCGCEGL (191 aa)). The Nucleophile role is filled by Cys86. Active-site residues include His173 and Glu175. In terms of domain architecture, GMPS ATP-PPase spans 200–392 (WTSASIIEDA…LGLPYNMLYR (193 aa)). 227-233 (SGGVDSS) serves as a coordination point for ATP.

In terms of assembly, homodimer.

The catalysed reaction is XMP + L-glutamine + ATP + H2O = GMP + L-glutamate + AMP + diphosphate + 2 H(+). The protein operates within purine metabolism; GMP biosynthesis; GMP from XMP (L-Gln route): step 1/1. Functionally, catalyzes the synthesis of GMP from XMP. In Aliivibrio salmonicida (strain LFI1238) (Vibrio salmonicida (strain LFI1238)), this protein is GMP synthase [glutamine-hydrolyzing].